We begin with the raw amino-acid sequence, 88 residues long: Small ribosomal subunit protein uS17 (88 aa).

Belongs to the universal ribosomal protein uS17 family. In terms of assembly, part of the 30S ribosomal subunit.

Its function is as follows. One of the primary rRNA binding proteins, it binds specifically to the 5'-end of 16S ribosomal RNA. The chain is Small ribosomal subunit protein uS17 from Prochlorococcus marinus (strain MIT 9312).